A 43-amino-acid polypeptide reads, in one-letter code: Protein PsbN (43 aa).

The chain crosses the membrane as a helical span at residues 5–27 (TLVTISISCLLVSFTGYAIYTSF).

This sequence belongs to the PsbN family.

It is found in the plastid. Its subcellular location is the chloroplast thylakoid membrane. Functionally, may play a role in photosystem I and II biogenesis. This chain is Protein PsbN, found in Welwitschia mirabilis (Tree tumbo).